Reading from the N-terminus, the 315-residue chain is MEEMSGESVVTSAVPAAATRTTSFKGASPSSKYVKLNVGGALYYTTMQTLTKQDTMLKAMFSGRMEVLTDSEGWILIDRCGKHFGTILNYLRDGAVPLPESRREIEELLAEAKYYLVQGLLEECQAALQNKDTYEPFCKVPVITSSKEEQRLIATSDKPAVKLLYNRSNNKYSYTSNSDDNMLKNIELFDKLSLRFNGRVLFIKDVIGDEICCWSFYGQGRKIAEVCCTSIVYATEKKQTKVEFPEARIYEETLNILLYEAQDGRGPDNALLEATGGAAGRSHHLDEDEERERERIERVRRIHIKRPDDRAHLHQ.

The residue at position 1 (Met-1) is an N-acetylmethionine. Ser-23 bears the Phosphoserine mark. The BTB domain occupies 32–100 (KYVKLNVGGA…LRDGAVPLPE (69 aa)). Positions 239–245 (QTKVEFP) match the Interaction with PCNA motif. The disordered stretch occupies residues 269-294 (NALLEATGGAAGRSHHLDEDEERERE).

It belongs to the BACURD family. In terms of assembly, homotetramer; forms a two-fold symmetric tetramer in solution. Interacts with CUL3; interaction is direct and forms a 5:5 heterodecamer. Component of the BCR(BACURD3) E3 ubiquitin ligase complex, at least composed of CUL3, KCTD10/BACURD3 and RBX1. Interacts with DNA polymerase delta subunit 2/POLD2. Interacts with PCNA. As to expression, expressed at highest levels in lung. Also detected in testis and heart. Very low expression, if any, in brain, liver, spleen, kidney and skeletal muscle.

It is found in the nucleus. It functions in the pathway protein modification; protein ubiquitination. Functionally, substrate-specific adapter of a BCR (BTB-CUL3-RBX1) E3 ubiquitin-protein ligase complex. The BCR(BACURD3) E3 ubiquitin ligase complex mediates the ubiquitination of target proteins, leading to their degradation by the proteasome. In Rattus norvegicus (Rat), this protein is BTB/POZ domain-containing adapter for CUL3-mediated RhoA degradation protein 3 (Kctd10).